The following is a 492-amino-acid chain: Probable malate:quinone oxidoreductase 1 (492 aa).

Belongs to the MQO family. The cofactor is FAD.

The catalysed reaction is (S)-malate + a quinone = a quinol + oxaloacetate. It functions in the pathway carbohydrate metabolism; tricarboxylic acid cycle; oxaloacetate from (S)-malate (quinone route): step 1/1. This Staphylococcus aureus (strain MW2) protein is Probable malate:quinone oxidoreductase 1.